Here is a 297-residue protein sequence, read N- to C-terminus: ATP phosphoribosyltransferase (297 aa).

Belongs to the ATP phosphoribosyltransferase family.

The protein resides in the cytoplasm. It catalyses the reaction 1-(5-phospho-beta-D-ribosyl)-ATP + diphosphate = 5-phospho-alpha-D-ribose 1-diphosphate + ATP. Its pathway is amino-acid biosynthesis; L-histidine biosynthesis; L-histidine from 5-phospho-alpha-D-ribose 1-diphosphate: step 1/9. Functionally, catalyzes the condensation of ATP and 5-phosphoribose 1-diphosphate to form N'-(5'-phosphoribosyl)-ATP (PR-ATP). Has a crucial role in the pathway because the rate of histidine biosynthesis seems to be controlled primarily by regulation of the enzymatic activity. This chain is ATP phosphoribosyltransferase (HIS1), found in Eremothecium gossypii (strain ATCC 10895 / CBS 109.51 / FGSC 9923 / NRRL Y-1056) (Yeast).